We begin with the raw amino-acid sequence, 653 residues long: DNA polymerase (653 aa).

It belongs to the DNA polymerase type-B family.

It carries out the reaction DNA(n) + a 2'-deoxyribonucleoside 5'-triphosphate = DNA(n+1) + diphosphate. Functionally, replicates viral genomic DNA. This chain is DNA polymerase, found in Acidianus convivator (ABV).